Here is a 207-residue protein sequence, read N- to C-terminus: dTTP/UTP pyrophosphatase (207 aa).

D79 (proton acceptor) is an active-site residue.

The protein belongs to the Maf family. YhdE subfamily. A divalent metal cation serves as cofactor.

The protein resides in the cytoplasm. The enzyme catalyses dTTP + H2O = dTMP + diphosphate + H(+). It carries out the reaction UTP + H2O = UMP + diphosphate + H(+). Functionally, nucleoside triphosphate pyrophosphatase that hydrolyzes dTTP and UTP. May have a dual role in cell division arrest and in preventing the incorporation of modified nucleotides into cellular nucleic acids. The chain is dTTP/UTP pyrophosphatase from Rhodopseudomonas palustris (strain ATCC BAA-98 / CGA009).